We begin with the raw amino-acid sequence, 304 residues long: 3-diazoavenalumate denitrifying reductase (304 aa).

Belongs to the NAD(P)-dependent epimerase/dehydratase family.

It catalyses the reaction 3-diazoavenalumate + NADPH + H(+) = avenalumate + N2 + NADP(+). The catalysed reaction is 3-diazoavenalumate + NADH + H(+) = avenalumate + N2 + NAD(+). The enzyme catalyses (E)-3-diazocoumarate + NADPH = N2 + (E)-4-coumarate + NADP(+). It carries out the reaction (E)-3-diazocoumarate + NADH = N2 + (E)-4-coumarate + NAD(+). Functionally, oxidoreductase involved in the biosynthesis of avenalumic acid (AVA). Catalyzes the denitrification of 3-diazoavenalumic acid (3-DAA) to produce AVA. It can also act on 3-diazocoumaric acid (3-DCA). Can use NADPH or NADH as a reductant, with a preference for NADPH. This chain is 3-diazoavenalumate denitrifying reductase, found in Streptomyces sp.